The primary structure comprises 1232 residues: Protein transport protein sec-16A.1 (1232 aa).

Disordered regions lie at residues 18–134 (GASG…SGYA), 172–193 (RNGF…EEDE), 815–843 (PVQE…KWHD), 866–942 (KPIA…VVPE), 972–1069 (QPIP…PQKQ), and 1140–1232 (PHLM…QNND). Positions 26–37 (DWNNPYNASPPS) are enriched in polar residues. A compositionally biased stretch (low complexity) spans 67–76 (RPILIQPARP). Residues 78–100 (SQKSNRQGTGMSNGSRGLNSTFN) are compositionally biased toward polar residues. Residues 817-836 (QESQQHVPQPQPVENKSISS) are compositionally biased toward polar residues. Low complexity predominate over residues 896-914 (SSVTVAASASRTSTLTSST). 3 stretches are compositionally biased toward polar residues: residues 1046 to 1060 (QQAT…NAKT), 1149 to 1159 (SNKSSTNSLRS), and 1168 to 1178 (YLQSGMATSQA). The segment covering 1194–1203 (PMSFSFMPAP) has biased composition (low complexity). Positions 1222-1232 (PSESLSKQNND) are enriched in polar residues.

Belongs to the SEC16 family. Interacts with tfg-1 (via N-terminus); the interaction is direct and is required for both the localization of tfg-1 and to maintain the distribution of sec-16A.1 at endoplasmic reticulum exit sites (ERES).

The protein resides in the endoplasmic reticulum. Its subcellular location is the endoplasmic reticulum-Golgi intermediate compartment. Functionally, plays a role in the organization of the endoplasmic reticulum exit sites (ERES), also known as transitional endoplasmic reticulum (tER). In association with tfg-1, accumulates at ERES to positively regulate secretory cargo trafficking from the endoplasmic reticulum to the endoplasmic reticulum-Golgi intermediate compartment (ERGIC) and Golgi apparatus. The protein is Protein transport protein sec-16A.1 of Caenorhabditis elegans.